A 232-amino-acid chain; its full sequence is Enolase-phosphatase E1 (232 aa).

Belongs to the HAD-like hydrolase superfamily. MasA/MtnC family. In terms of assembly, monomer. It depends on Mg(2+) as a cofactor.

It carries out the reaction 5-methylsulfanyl-2,3-dioxopentyl phosphate + H2O = 1,2-dihydroxy-5-(methylsulfanyl)pent-1-en-3-one + phosphate. Its pathway is amino-acid biosynthesis; L-methionine biosynthesis via salvage pathway; L-methionine from S-methyl-5-thio-alpha-D-ribose 1-phosphate: step 3/6. It functions in the pathway amino-acid biosynthesis; L-methionine biosynthesis via salvage pathway; L-methionine from S-methyl-5-thio-alpha-D-ribose 1-phosphate: step 4/6. Bifunctional enzyme that catalyzes the enolization of 2,3-diketo-5-methylthiopentyl-1-phosphate (DK-MTP-1-P) into the intermediate 2-hydroxy-3-keto-5-methylthiopentenyl-1-phosphate (HK-MTPenyl-1-P), which is then dephosphorylated to form the acireductone 1,2-dihydroxy-3-keto-5-methylthiopentene (DHK-MTPene). The chain is Enolase-phosphatase E1 from Xanthomonas euvesicatoria pv. vesicatoria (strain 85-10) (Xanthomonas campestris pv. vesicatoria).